A 211-amino-acid chain; its full sequence is MQKFILSAFVVALVAADCALKCPDGYFSFKRAPSAKNSMTGLWCVKAILSDTLISPNQAKQVCEKDGSILTSFENLDERTKLATVLRDFLSAKKLDRGGMIVDGHRLKNCETDDRTVLNAEPCRNSSTGFTTDEKHTDNTFMWKSWADTEPGQSIFEKQIESCLQLAISQFKSRTELINDVFCNYVKHPQNEGAYDLWNYGAVCGRLPEWN.

The first 16 residues, 1-16, serve as a signal peptide directing secretion; the sequence is MQKFILSAFVVALVAA.

The chain is C-type lectin domain-containing protein 158 (clec-158) from Caenorhabditis elegans.